The primary structure comprises 529 residues: BAR/IMD domain-containing adapter protein 2-like 2 (529 aa).

One can recognise an IMD domain in the interval 1 to 239 (MAPEMDQFYR…HSPGLLGPAL (239 aa)). Disordered regions lie at residues 221–327 (EASR…GGAR) and 403–510 (TSMS…TNPF). Phosphoserine is present on residues Ser231, Ser272, and Ser302. The span at 299–313 (SASSLYSGSAQSSRS) shows a compositional bias: low complexity. In terms of domain architecture, SH3 spans 324 to 387 (GGARRVRALV…PEAYVKALEE (64 aa)). Low complexity-rich tracts occupy residues 403 to 413 (TSMSPMTPMNP) and 452 to 462 (RSRTPSRVPSR). The span at 463-472 (APSPAPPPLP) shows a compositional bias: pro residues. Phosphoserine occurs at positions 478 and 481.

As to expression, expressed in the epithelial layer of the intestine (at protein level).

It localises to the cell membrane. It is found in the cell junction. The protein resides in the cytoplasmic vesicle membrane. Functionally, phosphoinositides-binding protein that induces the formation of planar or gently curved membrane structures. Binds to phosphoinositides, including to phosphatidylinositol 4,5-bisphosphate (PtdIns(4,5)P2) headgroups. There seems to be no clear preference for a specific phosphoinositide. This is BAR/IMD domain-containing adapter protein 2-like 2 (BAIAP2L2) from Homo sapiens (Human).